The primary structure comprises 310 residues: 26S proteasome non-ATPase regulatory subunit 14 (310 aa).

In terms of domain architecture, MPN spans 31–166; it reads VYISSLALLK…IDAFRLINAN (136 aa). Residues H113, H115, and D126 each contribute to the Zn(2+) site. A JAMM motif motif is present at residues 113 to 126; that stretch reads HSHPGFGCWLSGVD. Residues S150 and S224 each carry the phosphoserine modification. Residue T266 is modified to Phosphothreonine.

It belongs to the peptidase M67A family. PSMD14 subfamily. Component of the 19S proteasome regulatory particle complex. The 26S proteasome consists of a 20S core particle (CP) and two 19S regulatory subunits (RP). The regulatory particle is made of a lid composed of 9 subunits including PSMD4, a base containing 6 ATPases and few additional components. Within the complex, PSMD4 interacts with subunit PSMD7 through their respective MPN domain. Interacts with TXNL1. In terms of tissue distribution, widely expressed. Highest levels in heart and skeletal muscle.

In terms of biological role, component of the 26S proteasome, a multiprotein complex involved in the ATP-dependent degradation of ubiquitinated proteins. This complex plays a key role in the maintenance of protein homeostasis by removing misfolded or damaged proteins, which could impair cellular functions, and by removing proteins whose functions are no longer required. Therefore, the proteasome participates in numerous cellular processes, including cell cycle progression, apoptosis, or DNA damage repair. The PSMD14 subunit is a metalloprotease that specifically cleaves 'Lys-63'-linked polyubiquitin chains within the complex. Plays a role in response to double-strand breaks (DSBs): acts as a regulator of non-homologous end joining (NHEJ) by cleaving 'Lys-63'-linked polyubiquitin, thereby promoting retention of JMJD2A/KDM4A on chromatin and restricting TP53BP1 accumulation. Also involved in homologous recombination repair by promoting RAD51 loading. This chain is 26S proteasome non-ATPase regulatory subunit 14 (PSMD14), found in Homo sapiens (Human).